Reading from the N-terminus, the 747-residue chain is Phenylalanine ammonia-lyase 2 (747 aa).

A compositionally biased stretch (polar residues) spans 1-20 (MTILSGTTAAPRVNGTTMNG). The disordered stretch occupies residues 1 to 47 (MTILSGTTAAPRVNGTTMNGHSKPHTNGVHLNGHAPKATTESPWPQS). Y124 functions as the Proton donor/acceptor in the catalytic mechanism. Residues 229–231 (ASG) constitute a cross-link (5-imidazolinone (Ala-Gly)). S230 carries the 2,3-didehydroalanine (Ser) modification. N290, Q380, R386, N416, K487, E515, and N518 together coordinate (E)-cinnamate.

The protein belongs to the PAL/histidase family. As to quaternary structure, homotetramer. In terms of processing, contains an active site 4-methylidene-imidazol-5-one (MIO), which is formed autocatalytically by cyclization and dehydration of residues Ala-Ser-Gly.

Its subcellular location is the cytoplasm. It carries out the reaction L-phenylalanine = (E)-cinnamate + NH4(+). It participates in phenylpropanoid metabolism; trans-cinnamate biosynthesis; trans-cinnamate from L-phenylalanine: step 1/1. Functionally, catalyzes the non-oxidative deamination of L-phenylalanine to form trans-cinnamic acid and a free ammonium ion. Facilitates the commitment step in phenylpropanoid pathways that produce secondary metabolites such as lignins, coumarins and flavonoids. The polypeptide is Phenylalanine ammonia-lyase 2 (Pleurotus ostreatus (Oyster mushroom)).